A 114-amino-acid polypeptide reads, in one-letter code: Large ribosomal subunit protein uL22 (114 aa).

It belongs to the universal ribosomal protein uL22 family. Part of the 50S ribosomal subunit.

In terms of biological role, this protein binds specifically to 23S rRNA; its binding is stimulated by other ribosomal proteins, e.g. L4, L17, and L20. It is important during the early stages of 50S assembly. It makes multiple contacts with different domains of the 23S rRNA in the assembled 50S subunit and ribosome. Its function is as follows. The globular domain of the protein is located near the polypeptide exit tunnel on the outside of the subunit, while an extended beta-hairpin is found that lines the wall of the exit tunnel in the center of the 70S ribosome. In Streptococcus agalactiae serotype Ia (strain ATCC 27591 / A909 / CDC SS700), this protein is Large ribosomal subunit protein uL22.